A 147-amino-acid chain; its full sequence is Protein archease (147 aa).

The Ca(2+) site is built by Asp-17, Asp-146, and Ile-147.

Belongs to the archease family.

In terms of biological role, activates the tRNA-splicing ligase complex by facilitating the enzymatic turnover of catalytic subunit RtcB. Acts by promoting the guanylylation of RtcB, a key intermediate step in tRNA ligation. Can also alter the NTP specificity of RtcB such that ATP, dGTP or ITP is used efficiently. This chain is Protein archease, found in Pyrobaculum neutrophilum (strain DSM 2338 / JCM 9278 / NBRC 100436 / V24Sta) (Thermoproteus neutrophilus).